Here is a 227-residue protein sequence, read N- to C-terminus: NADH-quinone oxidoreductase subunit C (227 aa).

This sequence belongs to the complex I 30 kDa subunit family. In terms of assembly, NDH-1 is composed of 14 different subunits. Subunits NuoB, C, D, E, F, and G constitute the peripheral sector of the complex.

Its subcellular location is the cell inner membrane. The enzyme catalyses a quinone + NADH + 5 H(+)(in) = a quinol + NAD(+) + 4 H(+)(out). In terms of biological role, NDH-1 shuttles electrons from NADH, via FMN and iron-sulfur (Fe-S) centers, to quinones in the respiratory chain. The immediate electron acceptor for the enzyme in this species is believed to be ubiquinone. Couples the redox reaction to proton translocation (for every two electrons transferred, four hydrogen ions are translocated across the cytoplasmic membrane), and thus conserves the redox energy in a proton gradient. The sequence is that of NADH-quinone oxidoreductase subunit C from Coxiella burnetii (strain RSA 331 / Henzerling II).